A 704-amino-acid polypeptide reads, in one-letter code: Neutral ceramidase (704 aa).

The signal sequence occupies residues 1-23; it reads MAISKIAFLALIALSGLCGLASA. N-linked (GlcNAc...) asparagine glycosylation occurs at N230. The active-site Nucleophile is S276. 3 N-linked (GlcNAc...) asparagine glycosylation sites follow: N362, N550, and N598.

The protein belongs to the neutral ceramidase family. In terms of processing, N-glycosylated.

Its subcellular location is the secreted. It catalyses the reaction an N-acylsphing-4-enine + H2O = sphing-4-enine + a fatty acid. In terms of biological role, hydrolyzes the sphingolipid ceramide into sphingosine and free fatty acid at an optimal pH of 6.5-7.5. Acts as a key regulator of sphingolipid signaling metabolites by generating sphingosine at the cell surface. The polypeptide is Neutral ceramidase (CDase) (Drosophila pseudoobscura pseudoobscura (Fruit fly)).